Consider the following 516-residue polypeptide: D-aminopeptidase (516 aa).

Residue Ser61 is the Nucleophile of the active site. Lys64 serves as the catalytic Proton donor/acceptor. The interval Arg476–Asp486 is important for specificity. Asp480 contributes to the substrate binding site.

It belongs to the peptidase S12 family. As to quaternary structure, homodimer.

It catalyses the reaction Release of an N-terminal D-amino acid from a peptide, Xaa-|-Yaa-, in which Xaa is preferably D-Ala, D-Ser or D-Thr. D-amino acid amides and methyl esters also are hydrolyzed, as is glycine amide.. With respect to regulation, inhibited by beta-lactam compounds such as 6-aminopenicillic acid, 7-aminocephalosporanic acid, benzylpenicillin and ampicillin. Inhibited by p-chloromercuribenzoate. Hydrolyzes N-terminal residues in D-amino acid-containing peptides. The polypeptide is D-aminopeptidase (Cereibacter sphaeroides (strain KD131 / KCTC 12085) (Rhodobacter sphaeroides)).